The chain runs to 370 residues: tRNA-specific 2-thiouridylase MnmA (370 aa).

ATP-binding positions include 19–26 and Leu45; that span reads AMSGGVDS. Cys113 serves as the catalytic Nucleophile. Cys113 and Cys209 are joined by a disulfide. Gly137 contacts ATP. An interaction with tRNA region spans residues 159–161; that stretch reads KDQ. Cys209 (cysteine persulfide intermediate) is an active-site residue.

Belongs to the MnmA/TRMU family.

The protein localises to the cytoplasm. The catalysed reaction is S-sulfanyl-L-cysteinyl-[protein] + uridine(34) in tRNA + AH2 + ATP = 2-thiouridine(34) in tRNA + L-cysteinyl-[protein] + A + AMP + diphosphate + H(+). Its function is as follows. Catalyzes the 2-thiolation of uridine at the wobble position (U34) of tRNA, leading to the formation of s(2)U34. The protein is tRNA-specific 2-thiouridylase MnmA of Rickettsia conorii (strain ATCC VR-613 / Malish 7).